We begin with the raw amino-acid sequence, 148 residues long: Nucleoside diphosphate kinase (148 aa).

K9, F57, R85, T91, R102, and N112 together coordinate ATP. At T91 the chain carries Phosphothreonine. H115 acts as the Pros-phosphohistidine intermediate in catalysis. S122 carries the phosphoserine modification.

Belongs to the NDK family. In terms of assembly, homotetramer. It depends on Mg(2+) as a cofactor.

It is found in the cytoplasm. The enzyme catalyses a 2'-deoxyribonucleoside 5'-diphosphate + ATP = a 2'-deoxyribonucleoside 5'-triphosphate + ADP. The catalysed reaction is a ribonucleoside 5'-diphosphate + ATP = a ribonucleoside 5'-triphosphate + ADP. In terms of biological role, major role in the synthesis of nucleoside triphosphates other than ATP. The ATP gamma phosphate is transferred to the NDP beta phosphate via a ping-pong mechanism, using a phosphorylated active-site intermediate. The protein is Nucleoside diphosphate kinase of Oceanobacillus iheyensis (strain DSM 14371 / CIP 107618 / JCM 11309 / KCTC 3954 / HTE831).